A 678-amino-acid polypeptide reads, in one-letter code: DNA ligase (678 aa).

NAD(+) contacts are provided by residues 47–51 (DSDYD), 96–97 (SL), and Glu-122. The N6-AMP-lysine intermediate role is filled by Lys-124. NAD(+) contacts are provided by Arg-145, Glu-182, Lys-300, and Lys-324. Cys-418, Cys-421, Cys-436, and Cys-442 together coordinate Zn(2+). The BRCT domain maps to 602-678 (AYNESFTGKT…ILEDNLKDLL (77 aa)).

It belongs to the NAD-dependent DNA ligase family. LigA subfamily. Requires Mg(2+) as cofactor. Mn(2+) is required as a cofactor.

It catalyses the reaction NAD(+) + (deoxyribonucleotide)n-3'-hydroxyl + 5'-phospho-(deoxyribonucleotide)m = (deoxyribonucleotide)n+m + AMP + beta-nicotinamide D-nucleotide.. Its function is as follows. DNA ligase that catalyzes the formation of phosphodiester linkages between 5'-phosphoryl and 3'-hydroxyl groups in double-stranded DNA using NAD as a coenzyme and as the energy source for the reaction. It is essential for DNA replication and repair of damaged DNA. The chain is DNA ligase from Francisella tularensis subsp. holarctica (strain LVS).